Consider the following 304-residue polypeptide: Non-specific ribonucleoside hydrolase RihC (304 aa).

Residue His-233 is part of the active site.

The protein belongs to the IUNH family. RihC subfamily.

In terms of biological role, hydrolyzes both purine and pyrimidine ribonucleosides with a broad-substrate specificity. In Escherichia coli O8 (strain IAI1), this protein is Non-specific ribonucleoside hydrolase RihC.